Reading from the N-terminus, the 390-residue chain is Lipid-A-disaccharide synthase (390 aa).

Belongs to the LpxB family.

The enzyme catalyses a lipid X + a UDP-2-N,3-O-bis[(3R)-3-hydroxyacyl]-alpha-D-glucosamine = a lipid A disaccharide + UDP + H(+). Its pathway is bacterial outer membrane biogenesis; LPS lipid A biosynthesis. Its function is as follows. Condensation of UDP-2,3-diacylglucosamine and 2,3-diacylglucosamine-1-phosphate to form lipid A disaccharide, a precursor of lipid A, a phosphorylated glycolipid that anchors the lipopolysaccharide to the outer membrane of the cell. This is Lipid-A-disaccharide synthase from Haemophilus influenzae (strain PittEE).